Consider the following 352-residue polypeptide: Holliday junction branch migration complex subunit RuvB (352 aa).

Residues 1–182 (MRIELLNTPP…FGINSRFDYY (182 aa)) form a large ATPase domain (RuvB-L) region. ATP contacts are provided by residues Ile-21, Arg-22, Gly-63, Lys-66, Thr-67, Thr-68, 129 to 131 (EDF), Arg-172, Tyr-182, and Arg-219. Residue Thr-67 participates in Mg(2+) binding. The tract at residues 183–253 (EPELLTRIII…IAMKTLECLE (71 aa)) is small ATPAse domain (RuvB-S). A head domain (RuvB-H) region spans residues 256 to 352 (EEGLDEMDKK…LPLFDESEAD (97 aa)). DNA-binding residues include Arg-292, Arg-311, and Arg-316.

The protein belongs to the RuvB family. As to quaternary structure, homohexamer. Forms an RuvA(8)-RuvB(12)-Holliday junction (HJ) complex. HJ DNA is sandwiched between 2 RuvA tetramers; dsDNA enters through RuvA and exits via RuvB. An RuvB hexamer assembles on each DNA strand where it exits the tetramer. Each RuvB hexamer is contacted by two RuvA subunits (via domain III) on 2 adjacent RuvB subunits; this complex drives branch migration. In the full resolvosome a probable DNA-RuvA(4)-RuvB(12)-RuvC(2) complex forms which resolves the HJ.

Its subcellular location is the cytoplasm. It carries out the reaction ATP + H2O = ADP + phosphate + H(+). Functionally, the RuvA-RuvB-RuvC complex processes Holliday junction (HJ) DNA during genetic recombination and DNA repair, while the RuvA-RuvB complex plays an important role in the rescue of blocked DNA replication forks via replication fork reversal (RFR). RuvA specifically binds to HJ cruciform DNA, conferring on it an open structure. The RuvB hexamer acts as an ATP-dependent pump, pulling dsDNA into and through the RuvAB complex. RuvB forms 2 homohexamers on either side of HJ DNA bound by 1 or 2 RuvA tetramers; 4 subunits per hexamer contact DNA at a time. Coordinated motions by a converter formed by DNA-disengaged RuvB subunits stimulates ATP hydrolysis and nucleotide exchange. Immobilization of the converter enables RuvB to convert the ATP-contained energy into a lever motion, pulling 2 nucleotides of DNA out of the RuvA tetramer per ATP hydrolyzed, thus driving DNA branch migration. The RuvB motors rotate together with the DNA substrate, which together with the progressing nucleotide cycle form the mechanistic basis for DNA recombination by continuous HJ branch migration. Branch migration allows RuvC to scan DNA until it finds its consensus sequence, where it cleaves and resolves cruciform DNA. The chain is Holliday junction branch migration complex subunit RuvB from Chlorobium chlorochromatii (strain CaD3).